The chain runs to 245 residues: Small ribosomal subunit protein uS2 (245 aa).

This sequence belongs to the universal ribosomal protein uS2 family.

This is Small ribosomal subunit protein uS2 from Pseudomonas putida (strain ATCC 47054 / DSM 6125 / CFBP 8728 / NCIMB 11950 / KT2440).